The sequence spans 199 residues: Phosphatidylethanolamine N-methyltransferase (199 aa).

Residues M1–E12 are Lumenal-facing. An intramembrane region (helical) is located at residues P13 to A33. The Lumenal segment spans residues R34–A45. The chain crosses the membrane as a helical span at residues F46–L66. Residues R67 to G93 lie on the Cytoplasmic side of the membrane. A helical membrane pass occupies residues L94 to T114. G98–G100 lines the S-adenosyl-L-methionine pocket. The Lumenal segment spans residues G115–H157. Residues A158–L178 form a helical membrane-spanning segment. Residues Y179–S199 lie on the Cytoplasmic side of the membrane. E180–E181 contacts S-adenosyl-L-methionine.

Belongs to the class VI-like SAM-binding methyltransferase superfamily. PEMT/PEM2 methyltransferase family. In terms of tissue distribution, expressed in liver (at protein level).

The protein localises to the endoplasmic reticulum membrane. It localises to the mitochondrion membrane. It carries out the reaction a 1,2-diacyl-sn-glycero-3-phospho-N-methylethanolamine + S-adenosyl-L-methionine = a 1,2-diacyl-sn-glycero-3-phospho-N,N-dimethylethanolamine + S-adenosyl-L-homocysteine + H(+). It catalyses the reaction a 1,2-diacyl-sn-glycero-3-phospho-N,N-dimethylethanolamine + S-adenosyl-L-methionine = a 1,2-diacyl-sn-glycero-3-phosphocholine + S-adenosyl-L-homocysteine + H(+). The enzyme catalyses a 1,2-diacyl-sn-glycero-3-phosphoethanolamine + S-adenosyl-L-methionine = a 1,2-diacyl-sn-glycero-3-phospho-N-methylethanolamine + S-adenosyl-L-homocysteine + H(+). The catalysed reaction is 1,2-di-(9Z-octadecenoyl)-sn-glycero-3-phosphoethanolamine + S-adenosyl-L-methionine = 1,2-di-(9Z-octadecenoyl)-sn-glycero-3-phospho-N-methylethanolamine + S-adenosyl-L-homocysteine + H(+). It carries out the reaction 1,2-di-(9Z-octadecenoyl)-sn-glycero-3-phospho-N-methylethanolamine + S-adenosyl-L-methionine = 1,2-di-(9Z-octadecenoyl)-sn-glycero-3-phospho-N,N-dimethylethanolamine + S-adenosyl-L-homocysteine + H(+). It catalyses the reaction 1,2-di-(9Z-octadecenoyl)-sn-glycero-3-phospho-N,N-dimethylethanolamine + S-adenosyl-L-methionine = 1,2-di-(9Z-octadecenoyl)-sn-glycero-3-phosphocholine + S-adenosyl-L-homocysteine + H(+). The enzyme catalyses 1,2-di-(9Z,12Z-octadecadienoyl)-sn-glycero-3-phosphoethanolamine + S-adenosyl-L-methionine = 1,2-di-(9Z,12Z-octadecadienoyl)-sn-glycero-3-phospho-N-methylethanolamine + S-adenosyl-L-homocysteine + H(+). The catalysed reaction is 1,2-di-(9Z,12Z-octadecadienoyl)-sn-glycero-3-phospho-N-methylethanolamine + S-adenosyl-L-methionine = 1,2-di-(9Z,12Z-octadecadienoyl)-sn-glycero-3-phospho-N,N-dimethylethanolamine + S-adenosyl-L-homocysteine + H(+). It carries out the reaction 1,2-di-(9Z,12Z-octadecadienoyl)-sn-glycero-3-phospho-N,N-dimethylethanolamine + S-adenosyl-L-methionine = 1,2-di-(9Z,12Z-octadecadienoyl)-sn-glycero-3-phosphocholine + S-adenosyl-L-homocysteine + H(+). It catalyses the reaction 1,2-di-(9Z,12Z,15Z-octadecatrienoyl)-sn-glycero-3-phosphoethanolamine + S-adenosyl-L-methionine = 1,2-di-(9Z,12Z,15Z-octadecatrienoyl)-sn-glycero-3-phospho-N-methylethanolamine + S-adenosyl-L-homocysteine + H(+). The enzyme catalyses 1,2-di-(9Z,12Z,15Z-octadecatrienoyl)-sn-glycero-3-phospho-N-methylethanolamine + S-adenosyl-L-methionine = 1,2-di-(9Z,12Z,15Z-octadecatrienoyl)-sn-glycero-3-phospho-N,N-dimethylethanolamine + S-adenosyl-L-homocysteine + H(+). The catalysed reaction is 1,2-di-(9Z,12Z,15Z-octadecatrienoyl)-sn-glycero-3-phospho-N,N-dimethylethanolamine + S-adenosyl-L-methionine = 1,2-di-(9Z,12Z,15Z-octadecatrienoyl)-sn-glycero-3-phosphocholine + S-adenosyl-L-homocysteine + H(+). It carries out the reaction 1-hexadecanoyl-2-(4Z,7Z,10Z,13Z,16Z,19Z-docosahexaenoyl)-sn-glycero-3-phosphoethanolamine + S-adenosyl-L-methionine = 1-hexadecanoyl-2-(4Z,7Z,10Z,13Z,16Z,19Z-docosahexaenoyl)-sn-glycero-3-phospho-N-methylethanolamine + S-adenosyl-L-homocysteine + H(+). It catalyses the reaction 1-hexadecanoyl-2-(4Z,7Z,10Z,13Z,16Z,19Z-docosahexaenoyl)-sn-glycero-3-phospho-N-methylethanolamine + S-adenosyl-L-methionine = 1-hexadecanoyl-2-(4Z,7Z,10Z,13Z,16Z,19Z-docosahexaenoyl)-sn-glycero-3-phospho-N,N-dimethylethanolamine + S-adenosyl-L-homocysteine + H(+). The enzyme catalyses 1-hexadecanoyl-2-(4Z,7Z,10Z,13Z,16Z,19Z-docosahexaenoyl)-sn-glycero-3-phospho-N,N-dimethylethanolamine + S-adenosyl-L-methionine = 1-hexadecanoyl-2-(4Z,7Z,10Z,13Z,16Z,19Z-docosahexaenoyl)-sn-glycero-3-phosphocholine + S-adenosyl-L-homocysteine + H(+). The protein operates within phospholipid metabolism; phosphatidylcholine biosynthesis. Its function is as follows. Catalyzes the three sequential steps of the methylation pathway for the biosynthesis of phosphatidylcholine, a critical and essential component for membrane structure. Uses S-adenosylmethionine (S-adenosyl-L-methionine, SAM or AdoMet) as the methyl group donor for the methylation of phosphatidylethanolamine (1,2-diacyl-sn-glycero-3-phosphoethanolamine, PE) to phosphatidylmonomethylethanolamine (1,2-diacyl-sn-glycero-3-phospho-N-methylethanolamine, PMME), PMME to phosphatidyldimethylethanolamine (1,2-diacyl-sn-glycero-3-phospho-N,N-dimethylethanolamine, PDME), and PDME to phosphatidylcholine (1,2-diacyl-sn-glycero-3-phosphocholine, PC), producing S-adenosyl-L-homocysteine in each step. This chain is Phosphatidylethanolamine N-methyltransferase, found in Mus musculus (Mouse).